Here is a 286-residue protein sequence, read N- to C-terminus: Structure-specific endonuclease subunit SLX1 (286 aa).

Residues 15 to 98 enclose the GIY-YIG domain; it reads SFYGVYILKS…QHAYQTRHIN (84 aa).

The protein belongs to the SLX1 family. Forms a heterodimer with SLX4. A divalent metal cation is required as a cofactor.

Its subcellular location is the nucleus. In terms of biological role, catalytic subunit of the SLX1-SLX4 structure-specific endonuclease that resolves DNA secondary structures generated during DNA repair and recombination. Has endonuclease activity towards branched DNA substrates, introducing single-strand cuts in duplex DNA close to junctions with ss-DNA. The protein is Structure-specific endonuclease subunit SLX1 of Candida dubliniensis (strain CD36 / ATCC MYA-646 / CBS 7987 / NCPF 3949 / NRRL Y-17841) (Yeast).